Here is a 298-residue protein sequence, read N- to C-terminus: Elongation factor Ts (298 aa).

An involved in Mg(2+) ion dislocation from EF-Tu region spans residues 79-82 (TDFV).

This sequence belongs to the EF-Ts family.

It localises to the cytoplasm. Associates with the EF-Tu.GDP complex and induces the exchange of GDP to GTP. It remains bound to the aminoacyl-tRNA.EF-Tu.GTP complex up to the GTP hydrolysis stage on the ribosome. In Cereibacter sphaeroides (strain ATCC 17029 / ATH 2.4.9) (Rhodobacter sphaeroides), this protein is Elongation factor Ts.